The following is a 442-amino-acid chain: Syndecan-3 (442 aa).

Disordered stretches follow at residues 1 to 25 (MKPG…APGA) and 47 to 80 (RWRN…YSGS). An N-terminal signal peptide occupies residues 1 to 44 (MKPGPPRRGTAQGQRVDTATHAPGARGLLLPPLLLLLLAGRAAG). Residues 45 to 387 (AQRWRNENFE…SILERKEVLV (343 aa)) are Extracellular-facing. The segment covering 48–58 (WRNENFERPVD) has biased composition (basic and acidic residues). Acidic residues predominate over residues 61-75 (GSGDDDSFPDDELDD). O-linked (Xyl...) (glycosaminoglycan) serine glycosylation is found at S78, S80, S82, and S89. O-linked (GalNAc) threonine; by GALNT13 glycosylation is present at T107. 3 disordered regions span residues 152–199 (ESSQ…PATA), 253–293 (ATSR…AQTP), and 305–327 (EPEV…TTQP). Composition is skewed to low complexity over residues 157-199 (ATTI…PATA) and 276-287 (TLPLGTTAPGPT). S161 carries O-linked (GalNAc) serine; by GALNT13 glycosylation. Residues T162, T163, T170, and T172 are each glycosylated (O-linked (GalNAc) threonine; by GALNT13). O-linked (Xyl...) (glycosaminoglycan) serine glycosylation is found at S315 and S367. Residues 388-408 (AVIVGGVVGALFAAFLVTLLI) form a helical membrane-spanning segment. Y409, Y419, Y431, and Y441 each carry phosphotyrosine. The Cytoplasmic segment spans residues 409–442 (YRMKKKDEGSYTLEEPKQASVTYQKPDKQEEFYA). A disordered region spans residues 419–442 (YTLEEPKQASVTYQKPDKQEEFYA). A compositionally biased stretch (basic and acidic residues) spans 433–442 (KPDKQEEFYA).

This sequence belongs to the syndecan proteoglycan family. Interacts with TIAM1. Interacts with PTN (via heparan sulfate chains); this interaction mediates the neurite outgrowth-promoting signal from PTN to the cytoskeleton of growing neurites; this interaction mediates osteoblast recruitment. Interacts with MDK; this interaction induces SDC3 clustering; this interaction induces neuronal cell adhesion and neurite outgrowth. In terms of processing, O-glycosylated within the Thr/Ser-rich region which could interact with lectin domains on other molecules.

Its subcellular location is the cell membrane. Cell surface proteoglycan that may bear heparan sulfate. May have a role in the organization of cell shape by affecting the actin cytoskeleton, possibly by transferring signals from the cell surface in a sugar-dependent mechanism. The polypeptide is Syndecan-3 (Sdc3) (Mus musculus (Mouse)).